A 222-amino-acid polypeptide reads, in one-letter code: Triosephosphate isomerase (222 aa).

10 to 12 lines the substrate pocket; sequence NCK. His-93 acts as the Electrophile in catalysis. The active-site Proton acceptor is the Glu-141. Residues Ile-146, Gly-180, and 201–202 contribute to the substrate site; that span reads AS.

Belongs to the triosephosphate isomerase family. As to quaternary structure, homotetramer; dimer of dimers.

The protein resides in the cytoplasm. The enzyme catalyses D-glyceraldehyde 3-phosphate = dihydroxyacetone phosphate. The protein operates within carbohydrate biosynthesis; gluconeogenesis. It participates in carbohydrate degradation; glycolysis; D-glyceraldehyde 3-phosphate from glycerone phosphate: step 1/1. Involved in the gluconeogenesis. Catalyzes stereospecifically the conversion of dihydroxyacetone phosphate (DHAP) to D-glyceraldehyde-3-phosphate (G3P). This Cenarchaeum symbiosum (strain A) protein is Triosephosphate isomerase.